A 565-amino-acid polypeptide reads, in one-letter code: Sensor histidine kinase MtrB (565 aa).

Basic residues predominate over residues 1 to 13 (MMWGSRRRTRSRW). The interval 1–21 (MMWGSRRRTRSRWGRSGPMTR) is disordered. 2 consecutive transmembrane segments (helical) span residues 42 to 62 (VVAL…FVLT) and 213 to 233 (GTMI…ALLV). Residues 235–287 (RQVVVPVRSASRIAERFAEGHLSERMPVRGEDDMARLAMSFNDMAESLSRQIT) enclose the HAMP domain. One can recognise a Histidine kinase domain in the interval 302 to 519 (DVSHELRTPL…CFRLTLPLVR (218 aa)). Phosphohistidine; by autocatalysis is present on histidine 305. A disordered region spans residues 524 to 565 (TTSPLPMKPIPQPSPSGGQSPSTGPQHAKDRARQREHAERSL). A compositionally biased stretch (low complexity) spans 538 to 549 (PSGGQSPSTGPQ). The segment covering 550–565 (HAKDRARQREHAERSL) has biased composition (basic and acidic residues).

It is found in the cell membrane. It catalyses the reaction ATP + protein L-histidine = ADP + protein N-phospho-L-histidine.. Member of the two-component regulatory system MtrA/MtrB. Seems to function as a membrane-associated protein kinase that phosphorylates MtrA in response to environmental signals. This Mycolicibacterium paratuberculosis (strain ATCC BAA-968 / K-10) (Mycobacterium paratuberculosis) protein is Sensor histidine kinase MtrB (mtrB).